The primary structure comprises 1158 residues: ATP-dependent helicase/deoxyribonuclease subunit B (1158 aa).

Residues methionine 1 to asparagine 275 form the UvrD-like helicase ATP-binding domain. Glycine 8–serine 15 lines the ATP pocket. The region spanning asparagine 269 to valine 583 is the UvrD-like helicase C-terminal domain. [4Fe-4S] cluster contacts are provided by cysteine 784, cysteine 1112, cysteine 1115, and cysteine 1121.

This sequence belongs to the helicase family. AddB/RexB type 1 subfamily. In terms of assembly, heterodimer of AddA and AddB. It depends on Mg(2+) as a cofactor. [4Fe-4S] cluster serves as cofactor.

Its function is as follows. The heterodimer acts as both an ATP-dependent DNA helicase and an ATP-dependent, dual-direction single-stranded exonuclease. Recognizes the chi site generating a DNA molecule suitable for the initiation of homologous recombination. The AddB subunit has 5' -&gt; 3' nuclease activity but not helicase activity. This Staphylococcus aureus (strain MRSA252) protein is ATP-dependent helicase/deoxyribonuclease subunit B.